The chain runs to 218 residues: Thiamine-phosphate synthase (218 aa).

Residues 36–40 (QVRSK) and D70 each bind 4-amino-2-methyl-5-(diphosphooxymethyl)pyrimidine. D71 and D94 together coordinate Mg(2+). T113 lines the 4-amino-2-methyl-5-(diphosphooxymethyl)pyrimidine pocket. 141–143 (TPT) is a binding site for 2-[(2R,5Z)-2-carboxy-4-methylthiazol-5(2H)-ylidene]ethyl phosphate. K144 serves as a coordination point for 4-amino-2-methyl-5-(diphosphooxymethyl)pyrimidine.

This sequence belongs to the thiamine-phosphate synthase family. It depends on Mg(2+) as a cofactor.

The enzyme catalyses 2-[(2R,5Z)-2-carboxy-4-methylthiazol-5(2H)-ylidene]ethyl phosphate + 4-amino-2-methyl-5-(diphosphooxymethyl)pyrimidine + 2 H(+) = thiamine phosphate + CO2 + diphosphate. It catalyses the reaction 2-(2-carboxy-4-methylthiazol-5-yl)ethyl phosphate + 4-amino-2-methyl-5-(diphosphooxymethyl)pyrimidine + 2 H(+) = thiamine phosphate + CO2 + diphosphate. It carries out the reaction 4-methyl-5-(2-phosphooxyethyl)-thiazole + 4-amino-2-methyl-5-(diphosphooxymethyl)pyrimidine + H(+) = thiamine phosphate + diphosphate. It participates in cofactor biosynthesis; thiamine diphosphate biosynthesis; thiamine phosphate from 4-amino-2-methyl-5-diphosphomethylpyrimidine and 4-methyl-5-(2-phosphoethyl)-thiazole: step 1/1. Functionally, condenses 4-methyl-5-(beta-hydroxyethyl)thiazole monophosphate (THZ-P) and 2-methyl-4-amino-5-hydroxymethyl pyrimidine pyrophosphate (HMP-PP) to form thiamine monophosphate (TMP). The protein is Thiamine-phosphate synthase of Corynebacterium jeikeium (strain K411).